The chain runs to 376 residues: Penicillin V acylase (376 aa).

Positions Met-1–Ala-29 are cleaved as a signal peptide. Cys-30 (nucleophile) is an active-site residue.

The protein belongs to the peptidase C59 family. Homotetramer. Dimer of dimers.

It is found in the periplasm. It catalyses the reaction a penicillin + H2O = 6-aminopenicillanate + a carboxylate. Exhibits uncharacteristic kinetic behavior, showing positive cooperativity coupled with substrate inhibition. Penicillin acylase activity is enhanced in the presence of the reducing agent DTT, indicating active sulfhydryl group in the enzyme. Also shows enhanced activity in presence of organic solvents and detergents. Inhibited largely in presence of Ag(+), Hg(2+) and Cd(2+) ions, which have strong affinities for sulfhydryl groups. Activity is also inhibited by bile salts. Functionally, catalyzes the hydrolysis of penicillin V to 6-aminopenicillanate (6-APA). Shows high specificity towards penicillin V. Can use other beta-lactam substrates, including penicillin G, ampicillin, cephalexin, cloxacillin and dicloxacillin, but at a rate less than 10% of that of penicillin V. Does not show any activity with glyco- or tauro-conjugated bile salts. The polypeptide is Penicillin V acylase (Pectobacterium atrosepticum (strain SCRI 1043 / ATCC BAA-672) (Erwinia carotovora subsp. atroseptica)).